We begin with the raw amino-acid sequence, 313 residues long: Ribosomal RNA small subunit methyltransferase H (313 aa).

S-adenosyl-L-methionine is bound by residues 35-37, Asp55, Phe79, Asp100, and Gln107; that span reads GGH.

Belongs to the methyltransferase superfamily. RsmH family.

It is found in the cytoplasm. The catalysed reaction is cytidine(1402) in 16S rRNA + S-adenosyl-L-methionine = N(4)-methylcytidine(1402) in 16S rRNA + S-adenosyl-L-homocysteine + H(+). Specifically methylates the N4 position of cytidine in position 1402 (C1402) of 16S rRNA. The protein is Ribosomal RNA small subunit methyltransferase H of Burkholderia pseudomallei (strain 1106a).